An 819-amino-acid chain; its full sequence is Leucine--tRNA ligase (819 aa).

The 'HIGH' region motif lies at 51–61; it reads PYPSGNLHIGH. The 'KMSKS' region motif lies at 586-590; it reads KMSKS. Lysine 589 contributes to the ATP binding site.

The protein belongs to the class-I aminoacyl-tRNA synthetase family.

Its subcellular location is the cytoplasm. The catalysed reaction is tRNA(Leu) + L-leucine + ATP = L-leucyl-tRNA(Leu) + AMP + diphosphate. The polypeptide is Leucine--tRNA ligase (Deinococcus geothermalis (strain DSM 11300 / CIP 105573 / AG-3a)).